The following is a 268-amino-acid chain: Energy-coupling factor transporter transmembrane protein EcfT (268 aa).

The next 5 helical transmembrane spans lie at V29–V49, I75–V95, L107–L127, L152–I172, and W242–A262.

It belongs to the energy-coupling factor EcfT family. As to quaternary structure, forms a stable energy-coupling factor (ECF) transporter complex composed of 2 membrane-embedded substrate-binding proteins (S component), 2 ATP-binding proteins (A component) and 2 transmembrane proteins (T component). May be able to interact with more than 1 S component at a time.

Its subcellular location is the cell membrane. Its function is as follows. Transmembrane (T) component of an energy-coupling factor (ECF) ABC-transporter complex. Unlike classic ABC transporters this ECF transporter provides the energy necessary to transport a number of different substrates. This Bacillus selenitireducens (strain ATCC 700615 / DSM 15326 / MLS10) protein is Energy-coupling factor transporter transmembrane protein EcfT.